The primary structure comprises 142 residues: Transcriptional regulator MraZ (142 aa).

SpoVT-AbrB domains follow at residues 5-51 (ASAL…PRPE) and 77-120 (AMDV…DSQT).

This sequence belongs to the MraZ family. In terms of assembly, forms oligomers.

It is found in the cytoplasm. Its subcellular location is the nucleoid. This chain is Transcriptional regulator MraZ, found in Burkholderia ambifaria (strain MC40-6).